The primary structure comprises 1027 residues: Translation initiation factor IF-2 (1027 aa).

The segment at 31–433 (YVKSASSTVE…GGVRLPRGNG (403 aa)) is disordered. Residues 57 to 68 (KKGGGDSNGRAG) are compositionally biased toward gly residues. Residues 110-122 (GPKPGPKPGPKAP) are compositionally biased toward pro residues. The span at 123–145 (APETKPFEEAPAPAAKADAPAQP) shows a compositional bias: low complexity. Over residues 148 to 171 (EQPRSEQPRSEQPRSEQPRSERSG) the composition is skewed to basic and acidic residues. Composition is skewed to pro residues over residues 174 to 188 (PGGP…PKPG) and 201 to 212 (PPKPQSPKPGPR). Over residues 237–268 (PGGGQRQGGQGPGRGGPQGGRPDRQGGGGQGA) the composition is skewed to gly residues. The segment covering 293-302 (GMMPPRPNPG) has biased composition (pro residues). The segment covering 311–397 (SGGGPGGGRG…GAAGAFGRPG (87 aa)) has biased composition (gly residues). The span at 401–410 (RRGRKSKRQK) shows a compositional bias: basic residues. Positions 523-695 (SRPPVVTVMG…ILLTADATLD (173 aa)) constitute a tr-type G domain. The G1 stretch occupies residues 532–539 (GHVDHGKT). 532–539 (GHVDHGKT) is a GTP binding site. Residues 557–561 (GITQH) are G2. The tract at residues 582–585 (DTPG) is G3. GTP is bound by residues 582 to 586 (DTPGH) and 636 to 639 (NKID). Residues 636–639 (NKID) are G4. The segment at 672-674 (SAR) is G5.

This sequence belongs to the TRAFAC class translation factor GTPase superfamily. Classic translation factor GTPase family. IF-2 subfamily.

It is found in the cytoplasm. In terms of biological role, one of the essential components for the initiation of protein synthesis. Protects formylmethionyl-tRNA from spontaneous hydrolysis and promotes its binding to the 30S ribosomal subunits. Also involved in the hydrolysis of GTP during the formation of the 70S ribosomal complex. The sequence is that of Translation initiation factor IF-2 from Saccharopolyspora erythraea (strain ATCC 11635 / DSM 40517 / JCM 4748 / NBRC 13426 / NCIMB 8594 / NRRL 2338).